Consider the following 254-residue polypeptide: Receptor expression-enhancing protein 2 (254 aa).

The next 2 membrane-spanning stretches (helical) occupy residues 1–21 and 35–55; these read MVSW…YPAY and YVKW…ETLT. The residue at position 152 (Ser-152) is a Phosphoserine. The tract at residues 194–254 is disordered; the sequence is LSLRSSTSQP…KKSSGGGDSA (61 aa). The span at 205–219 shows a compositional bias: basic and acidic residues; that stretch reads PRTETSEDDLGDKAP.

The protein belongs to the DP1 family. Interacts with odorant receptor proteins.

Its subcellular location is the membrane. Required for endoplasmic reticulum (ER) network formation, shaping and remodeling. May enhance the cell surface expression of odorant receptors. The sequence is that of Receptor expression-enhancing protein 2 (Reep2) from Mus musculus (Mouse).